The sequence spans 334 residues: Glycerol-3-phosphate dehydrogenase [NAD(P)+] 2 (334 aa).

NADPH-binding residues include Trp-16, Arg-36, Arg-37, and Lys-110. Sn-glycerol 3-phosphate is bound by residues Lys-110 and Gly-140. Ala-144 contacts NADPH. Residues Lys-195, Asp-248, Ser-258, Arg-259, and Asn-260 each contribute to the sn-glycerol 3-phosphate site. Catalysis depends on Lys-195, which acts as the Proton acceptor. Arg-259 is an NADPH binding site. NADPH is bound by residues Val-282 and Glu-284.

This sequence belongs to the NAD-dependent glycerol-3-phosphate dehydrogenase family.

Its subcellular location is the cytoplasm. The catalysed reaction is sn-glycerol 3-phosphate + NAD(+) = dihydroxyacetone phosphate + NADH + H(+). The enzyme catalyses sn-glycerol 3-phosphate + NADP(+) = dihydroxyacetone phosphate + NADPH + H(+). Its pathway is membrane lipid metabolism; glycerophospholipid metabolism. Catalyzes the reduction of the glycolytic intermediate dihydroxyacetone phosphate (DHAP) to sn-glycerol 3-phosphate (G3P), the key precursor for phospholipid synthesis. The polypeptide is Glycerol-3-phosphate dehydrogenase [NAD(P)+] 2 (Mycobacterium tuberculosis (strain ATCC 25618 / H37Rv)).